Reading from the N-terminus, the 303-residue chain is N-acetyl-D-glucosamine kinase (303 aa).

ATP contacts are provided by residues 4–11 and 133–140; these read GFDIGGTK and GVGGGLVL. Residues His157, Cys177, Cys179, and Cys184 each contribute to the Zn(2+) site.

It belongs to the ROK (NagC/XylR) family. NagK subfamily.

The enzyme catalyses N-acetyl-D-glucosamine + ATP = N-acetyl-D-glucosamine 6-phosphate + ADP + H(+). The protein operates within cell wall biogenesis; peptidoglycan recycling. Catalyzes the phosphorylation of N-acetyl-D-glucosamine (GlcNAc) derived from cell-wall degradation, yielding GlcNAc-6-P. This chain is N-acetyl-D-glucosamine kinase, found in Salmonella dublin (strain CT_02021853).